The chain runs to 45 residues: Natriuretic peptide OsNP-d (45 aa).

Positions 1-5 (PAAGL) are excised as a propeptide. Residues cysteine 14 and cysteine 30 are joined by a disulfide bond.

This sequence belongs to the natriuretic peptide family. In terms of tissue distribution, expressed by the venom gland.

Its subcellular location is the secreted. Functionally, snake venom natriuretic peptide that targets both NPR1 and NPR2. Exhibits hypotensive and vasodepressor activities. The sequence is that of Natriuretic peptide OsNP-d from Oxyuranus scutellatus scutellatus (Australian taipan).